The following is an 83-amino-acid chain: Small ribosomal subunit protein eS27 (83 aa).

The segment at 37 to 59 (CPGCFNITTVFSHAQTVVICGSC) adopts a C4-type zinc-finger fold.

Belongs to the eukaryotic ribosomal protein eS27 family. As to quaternary structure, component of the small ribosomal subunit (SSU). Mature yeast ribosomes consist of a small (40S) and a large (60S) subunit. The 40S small subunit contains 1 molecule of ribosomal RNA (18S rRNA) and at least 33 different proteins. The large 60S subunit contains 3 rRNA molecules (25S, 5.8S and 5S rRNA) and at least 46 different proteins. The cofactor is Zn(2+).

It localises to the cytoplasm. Its function is as follows. Component of the ribosome, a large ribonucleoprotein complex responsible for the synthesis of proteins in the cell. The small ribosomal subunit (SSU) binds messenger RNAs (mRNAs) and translates the encoded message by selecting cognate aminoacyl-transfer RNA (tRNA) molecules. The large subunit (LSU) contains the ribosomal catalytic site termed the peptidyl transferase center (PTC), which catalyzes the formation of peptide bonds, thereby polymerizing the amino acids delivered by tRNAs into a polypeptide chain. The nascent polypeptides leave the ribosome through a tunnel in the LSU and interact with protein factors that function in enzymatic processing, targeting, and the membrane insertion of nascent chains at the exit of the ribosomal tunnel. The chain is Small ribosomal subunit protein eS27 (rps27) from Schizosaccharomyces pombe (strain 972 / ATCC 24843) (Fission yeast).